A 533-amino-acid chain; its full sequence is MAQVVHIKEQKYDRQLRLWGDHGQEALESAHVCLINATATGTEILKNLVLPGIGLFTIVDGNVVAGEDVGNNFFLQKESIGKNRAQTSMELLQELNDDVTGNFVPESPEQLLDKDPSFFCKFTMVISTQLPESTLLRLAETLWDSNIPLLVCRAYGFVGYMRIIVKEHTVIESHPDNALEDLRLDQPFPELREHLQSYDLDHMERKDHSHTPWIIVVAKYLDKWRSENGGQMPKSYKEKESFRDLIRQGILKNENGVPEDEENFEEAIKNVNTALNITKVSSSVEEILNDDRCTNLTHQSTSFWILARAVKEFMAMEGKGNLPLRGTIPDMIADSDKFIKLQNIYREKAKKDASAVESCVSKLLQSVGRPPESISERDIRLFCRNCAFLRVVRCRSLEEEYGLDTAKKDDIVSLMENPDNEIVLYLMLRAVDRFQKQLGRYPGIYNYQIESDIGKLKSCLNGLLQEYGLSLTVKDEYIQEFCRYGAAEPHTIASFLGGAAAQEAIKIITKQFVIFNNTFIYNAMLQTSATFQL.

An interaction with uba3 region spans residues 330–343; that stretch reads DMIADSDKFIKLQN.

The protein belongs to the ubiquitin-activating E1 family. ULA1 subfamily. Heterodimer of uba3 and nae1. The complex binds nedd8 and ube2m.

The protein operates within protein modification; protein neddylation. In terms of biological role, regulatory subunit of the dimeric uba3-nae1 E1 enzyme. E1 activates nedd8 by first adenylating its C-terminal glycine residue with ATP, thereafter linking this residue to the side chain of the catalytic cysteine, yielding a nedd8-uba3 thioester and free AMP. E1 finally transfers nedd8 to the catalytic cysteine of ube2m. The covalent attachment of nedd8 to target proteins is known as 'neddylation' and the process is involved in the regulation of cell growth, viability and development. The chain is NEDD8-activating enzyme E1 regulatory subunit (nae1) from Xenopus laevis (African clawed frog).